The chain runs to 197 residues: Holliday junction branch migration complex subunit RuvA (197 aa).

Residues 1–63 (MYAYLKGIIT…EDAHLLYGFR (63 aa)) are domain I. The segment at 64-142 (SEDEKKLFLS…VAGDDLPAKV (79 aa)) is domain II. Residues 143 to 147 (AVQAS) are flexible linker. The tract at residues 148–197 (AENQELEEAMEAMLALGYKATELKKIKKFFEGTTDTAENYIKSALKMLVK) is domain III.

Belongs to the RuvA family. As to quaternary structure, homotetramer. Forms an RuvA(8)-RuvB(12)-Holliday junction (HJ) complex. HJ DNA is sandwiched between 2 RuvA tetramers; dsDNA enters through RuvA and exits via RuvB. An RuvB hexamer assembles on each DNA strand where it exits the tetramer. Each RuvB hexamer is contacted by two RuvA subunits (via domain III) on 2 adjacent RuvB subunits; this complex drives branch migration. In the full resolvosome a probable DNA-RuvA(4)-RuvB(12)-RuvC(2) complex forms which resolves the HJ.

The protein localises to the cytoplasm. The RuvA-RuvB-RuvC complex processes Holliday junction (HJ) DNA during genetic recombination and DNA repair, while the RuvA-RuvB complex plays an important role in the rescue of blocked DNA replication forks via replication fork reversal (RFR). RuvA specifically binds to HJ cruciform DNA, conferring on it an open structure. The RuvB hexamer acts as an ATP-dependent pump, pulling dsDNA into and through the RuvAB complex. HJ branch migration allows RuvC to scan DNA until it finds its consensus sequence, where it cleaves and resolves the cruciform DNA. The polypeptide is Holliday junction branch migration complex subunit RuvA (Streptococcus pneumoniae (strain Hungary19A-6)).